Here is a 447-residue protein sequence, read N- to C-terminus: Guanine nucleotide-binding protein alpha-1 subunit (447 aa).

Residue Gly-2 is the site of N-myristoyl glycine attachment. Residue Cys-3 is the site of S-palmitoyl cysteine attachment. In terms of domain architecture, G-alpha spans 40 to 447 (NEVKLLLLGA…QQNLKKSGIL (408 aa)). Positions 43 to 56 (KLLLLGAGESGKST) are G1 motif. GTP contacts are provided by Glu-51, Ser-52, Gly-53, Lys-54, Ser-55, Thr-56, Leu-269, Thr-275, Gly-297, Asn-363, Lys-364, Asp-366, and Ala-419. Ser-55 contacts Mg(2+). Residues 267–275 (DILKGRIKT) form a G2 motif region. Position 275 (Thr-275) interacts with Mg(2+). A G3 motif region spans residues 290 to 299 (FKVYDAGGQR). Residues 359-366 (ILFLNKVD) are G4 motif. Positions 417–422 (TCATDT) are G5 motif.

This sequence belongs to the G-alpha family. As to quaternary structure, g proteins are composed of 3 units; alpha, beta and gamma. The alpha chain contains the guanine nucleotide binding site. Mg(2+) serves as cofactor.

In terms of biological role, guanine nucleotide-binding proteins (G proteins) are involved as modulators or transducers in various transmembrane signaling systems. This protein is involved in the mating response pathway. The protein is Guanine nucleotide-binding protein alpha-1 subunit (GPA1) of Kluyveromyces lactis (strain ATCC 8585 / CBS 2359 / DSM 70799 / NBRC 1267 / NRRL Y-1140 / WM37) (Yeast).